Here is a 238-residue protein sequence, read N- to C-terminus: Ribosome-recycling factor, mitochondrial (238 aa).

This sequence belongs to the RRF family.

It localises to the mitochondrion. Functionally, responsible for the release of ribosomes from messenger RNA at the termination of protein biosynthesis. May increase the efficiency of translation by recycling ribosomes from one round of translation to another. The sequence is that of Ribosome-recycling factor, mitochondrial from Caenorhabditis elegans.